Reading from the N-terminus, the 100-residue chain is MVKRTHGYRYKTRKLLRKKPREKGLSGLSRLLYEYKVGDKVIIDIDSTFISTAPHRRYQGKVGTVVGIRGRAYVIETFLGDKKKIIITTPEHLKPYQGGS.

This sequence belongs to the eukaryotic ribosomal protein eL21 family.

This is Large ribosomal subunit protein eL21 from Pyrobaculum aerophilum (strain ATCC 51768 / DSM 7523 / JCM 9630 / CIP 104966 / NBRC 100827 / IM2).